The sequence spans 142 residues: Nucleoside diphosphate kinase (142 aa).

ATP-binding residues include K11, F59, R87, T93, R104, and N114. H117 serves as the catalytic Pros-phosphohistidine intermediate.

This sequence belongs to the NDK family. Homotetramer. The cofactor is Mg(2+).

The protein localises to the cytoplasm. The enzyme catalyses a 2'-deoxyribonucleoside 5'-diphosphate + ATP = a 2'-deoxyribonucleoside 5'-triphosphate + ADP. It catalyses the reaction a ribonucleoside 5'-diphosphate + ATP = a ribonucleoside 5'-triphosphate + ADP. Major role in the synthesis of nucleoside triphosphates other than ATP. The ATP gamma phosphate is transferred to the NDP beta phosphate via a ping-pong mechanism, using a phosphorylated active-site intermediate. This chain is Nucleoside diphosphate kinase, found in Aeromonas salmonicida (strain A449).